Here is a 288-residue protein sequence, read N- to C-terminus: Pantothenate synthetase (288 aa).

31–38 (MGNLHRGH) is a binding site for ATP. Catalysis depends on His-38, which acts as the Proton donor. Gln-62 contacts (R)-pantoate. Residue Gln-62 coordinates beta-alanine. An ATP-binding site is contributed by 150 to 153 (GQKD). A (R)-pantoate-binding site is contributed by Gln-156. Residues Ile-179 and 187–190 (LSSR) each bind ATP.

Belongs to the pantothenate synthetase family. In terms of assembly, homodimer.

It is found in the cytoplasm. It catalyses the reaction (R)-pantoate + beta-alanine + ATP = (R)-pantothenate + AMP + diphosphate + H(+). It functions in the pathway cofactor biosynthesis; (R)-pantothenate biosynthesis; (R)-pantothenate from (R)-pantoate and beta-alanine: step 1/1. In terms of biological role, catalyzes the condensation of pantoate with beta-alanine in an ATP-dependent reaction via a pantoyl-adenylate intermediate. The chain is Pantothenate synthetase from Wigglesworthia glossinidia brevipalpis.